A 1058-amino-acid polypeptide reads, in one-letter code: Carbamoyl phosphate synthase large chain (1058 aa).

The tract at residues 1–401 (MSKRKDIQKI…SLLKACRSLE (401 aa)) is carboxyphosphate synthetic domain. Residues Arg-129, Arg-169, Gly-175, Gly-176, Arg-208, Ile-210, Glu-215, Gly-241, Ile-242, His-243, Gln-284, and Glu-298 each coordinate ATP. Positions 133–327 (KQLMQELDQP…IAKLAAKIAV (195 aa)) constitute an ATP-grasp 1 domain. The Mg(2+) site is built by Gln-284, Glu-298, and Asn-300. 3 residues coordinate Mn(2+): Gln-284, Glu-298, and Asn-300. The interval 402–546 (IGVCHNEMTS…YSTYELENES (145 aa)) is oligomerization domain. The carbamoyl phosphate synthetic domain stretch occupies residues 547-929 (VQSNKESILV…ALYKAFEANN (383 aa)). The ATP-grasp 2 domain maps to 671-861 (EKALKELGIP…MAQIATKLIL (191 aa)). ATP is bound by residues Arg-707, Ser-746, Ile-748, Glu-752, Gly-777, Val-778, His-779, Ser-780, Gln-820, and Glu-832. Mg(2+)-binding residues include Gln-820, Glu-832, and Asn-834. Residues Gln-820, Glu-832, and Asn-834 each contribute to the Mn(2+) site. An MGS-like domain is found at 930 to 1058 (SHLSEFGQIV…ESRCFNIEAI (129 aa)). Positions 930–1058 (SHLSEFGQIV…ESRCFNIEAI (129 aa)) are allosteric domain.

Belongs to the CarB family. As to quaternary structure, composed of two chains; the small (or glutamine) chain promotes the hydrolysis of glutamine to ammonia, which is used by the large (or ammonia) chain to synthesize carbamoyl phosphate. Tetramer of heterodimers (alpha,beta)4. It depends on Mg(2+) as a cofactor. Mn(2+) is required as a cofactor.

It catalyses the reaction hydrogencarbonate + L-glutamine + 2 ATP + H2O = carbamoyl phosphate + L-glutamate + 2 ADP + phosphate + 2 H(+). The enzyme catalyses hydrogencarbonate + NH4(+) + 2 ATP = carbamoyl phosphate + 2 ADP + phosphate + 2 H(+). The protein operates within amino-acid biosynthesis; L-arginine biosynthesis; carbamoyl phosphate from bicarbonate: step 1/1. It functions in the pathway pyrimidine metabolism; UMP biosynthesis via de novo pathway; (S)-dihydroorotate from bicarbonate: step 1/3. Its function is as follows. Large subunit of the glutamine-dependent carbamoyl phosphate synthetase (CPSase). CPSase catalyzes the formation of carbamoyl phosphate from the ammonia moiety of glutamine, carbonate, and phosphate donated by ATP, constituting the first step of 2 biosynthetic pathways, one leading to arginine and/or urea and the other to pyrimidine nucleotides. The large subunit (synthetase) binds the substrates ammonia (free or transferred from glutamine from the small subunit), hydrogencarbonate and ATP and carries out an ATP-coupled ligase reaction, activating hydrogencarbonate by forming carboxy phosphate which reacts with ammonia to form carbamoyl phosphate. The sequence is that of Carbamoyl phosphate synthase large chain from Streptococcus pyogenes serotype M5 (strain Manfredo).